We begin with the raw amino-acid sequence, 120 residues long: NAD(P)H-quinone oxidoreductase subunit 3 (120 aa).

3 consecutive transmembrane segments (helical) span residues 10–30, 64–84, and 89–109; these read LLVF…ASAL, MFAL…PWAV, and LGLL…VGLV.

Belongs to the complex I subunit 3 family. NDH-1 can be composed of about 15 different subunits; different subcomplexes with different compositions have been identified which probably have different functions.

It localises to the cellular thylakoid membrane. It carries out the reaction a plastoquinone + NADH + (n+1) H(+)(in) = a plastoquinol + NAD(+) + n H(+)(out). It catalyses the reaction a plastoquinone + NADPH + (n+1) H(+)(in) = a plastoquinol + NADP(+) + n H(+)(out). NDH-1 shuttles electrons from an unknown electron donor, via FMN and iron-sulfur (Fe-S) centers, to quinones in the respiratory and/or the photosynthetic chain. The immediate electron acceptor for the enzyme in this species is believed to be plastoquinone. Couples the redox reaction to proton translocation, and thus conserves the redox energy in a proton gradient. Cyanobacterial NDH-1 also plays a role in inorganic carbon-concentration. This chain is NAD(P)H-quinone oxidoreductase subunit 3, found in Synechococcus sp. (strain JA-2-3B'a(2-13)) (Cyanobacteria bacterium Yellowstone B-Prime).